Consider the following 806-residue polypeptide: Exonuclease 1 (806 aa).

The segment at M1–N99 is N-domain. 7 residues coordinate Mg(2+): D30, D78, E150, D152, D171, D173, and D225. The tract at residues R138 to S229 is I-domain. Disordered stretches follow at residues R337–S426, H443–P475, and E512–L754. The span at R355–Y378 shows a compositional bias: polar residues. The span at P412–T425 shows a compositional bias: basic and acidic residues. Composition is skewed to polar residues over residues T447–N458, S533–L542, and W578–V589. The span at P592–R601 shows a compositional bias: basic and acidic residues. Positions S602 to F615 are enriched in polar residues. Over residues S651–S670 the composition is skewed to low complexity. A compositionally biased stretch (basic and acidic residues) spans N676–S685. A compositionally biased stretch (low complexity) spans V686–L696. The segment covering K744 to L754 has biased composition (polar residues).

This sequence belongs to the XPG/RAD2 endonuclease family. EXO1 subfamily. Mg(2+) serves as cofactor.

It is found in the nucleus. In terms of biological role, 5'-&gt;3' double-stranded DNA exonuclease which may also contain a cryptic 3'-&gt;5' double-stranded DNA exonuclease activity. Also exhibits endonuclease activity against 5'-overhanging flap structures similar to those generated by displacement synthesis when DNA polymerase encounters the 5'-end of a downstream Okazaki fragment. Required for DNA mismatch repair (MMR). The protein is Exonuclease 1 (exo1) of Danio rerio (Zebrafish).